Reading from the N-terminus, the 209-residue chain is Large ribosomal subunit protein uL3 (209 aa).

A disordered region spans residues 128-163 (AHRGPMTHGSKFHRAVGSMGASSDPSRTFKNKRMPG).

Belongs to the universal ribosomal protein uL3 family. In terms of assembly, part of the 50S ribosomal subunit. Forms a cluster with proteins L14 and L19.

One of the primary rRNA binding proteins, it binds directly near the 3'-end of the 23S rRNA, where it nucleates assembly of the 50S subunit. This Clostridium botulinum (strain 657 / Type Ba4) protein is Large ribosomal subunit protein uL3.